Consider the following 1109-residue polypeptide: Hybrid signal transduction histidine kinase F (1109 aa).

One can recognise a PAC domain in the interval 237–289 (LSTETTITKKNGEKYPAEVFVKEISDIHSNSIGIMIIVRDITDQIRLKEMNIE). One can recognise a Histidine kinase domain in the interval 324–547 (TISHEIRTPL…LFSVTLNFEQ (224 aa)). His-327 carries the phosphohistidine; by autocatalysis modification. Residues 719 to 760 (SNLIQTISQIDNQQQQQQQQLQQQEQEQQHQQQQLQQEQQFV) are a coiled coil. Over residues 739–758 (LQQQEQEQQHQQQQLQQEQQ) the composition is skewed to low complexity. The segment at 739 to 819 (LQQQEQEQQH…TSSDSGESDE (81 aa)) is disordered. Over residues 767 to 782 (DSSEKKTTPKKDRGKY) the composition is skewed to basic and acidic residues. The Response regulatory domain occupies 928–1048 (RILLVDDNAV…PLGELVKKYL (121 aa)). At Asp-977 the chain carries 4-aspartylphosphate. The segment covering 1052–1099 (NNNNNNNNNNNNNNNNNSNNNNSNSNSNPNSNSNSNSNSNSNPNQNPN) has biased composition (low complexity). The interval 1052-1109 (NNNNNNNNNNNNNNNNNSNNNNSNSNSNPNSNSNSNSNSNSNPNQNPNYCNNLPTDFI) is disordered. A compositionally biased stretch (polar residues) spans 1100-1109 (YCNNLPTDFI).

It catalyses the reaction ATP + protein L-histidine = ADP + protein N-phospho-L-histidine.. In terms of biological role, acts as a receptor histidine kinase for a signal transduction pathway. This protein undergoes an ATP-dependent autophosphorylation at a conserved histidine residue in the kinase core, and a phosphoryl group is then transferred to a conserved aspartate residue in the receiver domain. This Dictyostelium discoideum (Social amoeba) protein is Hybrid signal transduction histidine kinase F (dhkF).